The following is a 364-amino-acid chain: Aminomethyltransferase (364 aa).

Belongs to the GcvT family. As to quaternary structure, the glycine cleavage system is composed of four proteins: P, T, L and H.

It catalyses the reaction N(6)-[(R)-S(8)-aminomethyldihydrolipoyl]-L-lysyl-[protein] + (6S)-5,6,7,8-tetrahydrofolate = N(6)-[(R)-dihydrolipoyl]-L-lysyl-[protein] + (6R)-5,10-methylene-5,6,7,8-tetrahydrofolate + NH4(+). Functionally, the glycine cleavage system catalyzes the degradation of glycine. This is Aminomethyltransferase from Anoxybacillus flavithermus (strain DSM 21510 / WK1).